The sequence spans 526 residues: NAD(P)H-quinone oxidoreductase chain 4 1 (526 aa).

14 helical membrane-spanning segments follow: residues 7–27 (FPWL…IPLL), 35–55 (WYAL…FGWH), 86–106 (LSFP…VAAW), 114–134 (LFFF…LAQD), 135–155 (LLLF…LIAI), 168–188 (FILY…AMAF), 208–228 (ALQI…LPVF), 242–262 (SAPI…YGLI), 276–296 (FAPV…LAAL), 310–330 (IAHM…GLNG), 331–351 (ALLQ…LTGI), 374–396 (AFAL…GFVG), 417–437 (GIAL…LSML), and 463–483 (MAVA…PRLA).

Belongs to the complex I subunit 4 family.

The protein resides in the cellular thylakoid membrane. The catalysed reaction is a plastoquinone + NADH + (n+1) H(+)(in) = a plastoquinol + NAD(+) + n H(+)(out). The enzyme catalyses a plastoquinone + NADPH + (n+1) H(+)(in) = a plastoquinol + NADP(+) + n H(+)(out). In terms of biological role, NDH-1 shuttles electrons from NAD(P)H, via FMN and iron-sulfur (Fe-S) centers, to quinones in the respiratory chain. The immediate electron acceptor for the enzyme in this species is believed to be plastoquinone. Couples the redox reaction to proton translocation (for every two electrons transferred, four hydrogen ions are translocated across the cytoplasmic membrane), and thus conserves the redox energy in a proton gradient. The sequence is that of NAD(P)H-quinone oxidoreductase chain 4 1 from Synechococcus sp. (strain JA-3-3Ab) (Cyanobacteria bacterium Yellowstone A-Prime).